A 100-amino-acid chain; its full sequence is Urease subunit gamma (100 aa).

It belongs to the urease gamma subunit family. In terms of assembly, heterotrimer of UreA (gamma), UreB (beta) and UreC (alpha) subunits. Three heterotrimers associate to form the active enzyme.

The protein resides in the cytoplasm. The catalysed reaction is urea + 2 H2O + H(+) = hydrogencarbonate + 2 NH4(+). It participates in nitrogen metabolism; urea degradation; CO(2) and NH(3) from urea (urease route): step 1/1. The polypeptide is Urease subunit gamma (Pseudarthrobacter chlorophenolicus (strain ATCC 700700 / DSM 12829 / CIP 107037 / JCM 12360 / KCTC 9906 / NCIMB 13794 / A6) (Arthrobacter chlorophenolicus)).